The chain runs to 195 residues: Probable GTP-binding protein EngB (195 aa).

Residues 24–195 enclose the EngB-type G domain; sequence ELPEIALAGR…EAWDAILEKL (172 aa). GTP contacts are provided by residues 32-39, 59-63, 77-80, 144-147, and 176-178; these read GRSNVGKS, GKTQL, DVPG, TKAD, and FSS. Residues Ser-39 and Thr-61 each contribute to the Mg(2+) site.

This sequence belongs to the TRAFAC class TrmE-Era-EngA-EngB-Septin-like GTPase superfamily. EngB GTPase family. The cofactor is Mg(2+).

Functionally, necessary for normal cell division and for the maintenance of normal septation. The protein is Probable GTP-binding protein EngB of Streptococcus pneumoniae (strain P1031).